The following is a 602-amino-acid chain: Glutaminase liver isoform, mitochondrial (602 aa).

The transit peptide at 1-14 (MRSMRALQNALSRA) directs the protein to the mitochondrion. Disordered regions lie at residues 1 to 28 (MRSM…HPSR) and 46 to 67 (QGRG…SNSG). A substrate-binding site is contributed by serine 219. N6-succinyllysine is present on lysine 253. Residue asparagine 268 coordinates substrate. N6-acetyllysine occurs at positions 279 and 284. Substrate contacts are provided by glutamate 314 and asparagine 321. An N6-acetyllysine modification is found at lysine 329. Substrate-binding residues include tyrosine 347, tyrosine 399, and valine 417. ANK repeat units lie at residues 518 to 551 (DSRT…VKDR) and 552 to 585 (WGNI…SETQ).

It belongs to the glutaminase family. In terms of assembly, homotetramer, dimer of dimers. Does not assemble into higher oligomers. Interacts with the PDZ domain of the syntrophin SNTA1. Interacts with the PDZ domain of TAX1BP3. Liver specific.

It localises to the mitochondrion. The enzyme catalyses L-glutamine + H2O = L-glutamate + NH4(+). Plays an important role in the regulation of glutamine catabolism. Promotes mitochondrial respiration and increases ATP generation in cells by catalyzing the synthesis of glutamate and alpha-ketoglutarate. Increases cellular anti-oxidant function via NADH and glutathione production. May play a role in preventing tumor proliferation. This is Glutaminase liver isoform, mitochondrial (Gls2) from Rattus norvegicus (Rat).